The sequence spans 159 residues: uncharacterized protein (159 aa).

3 helical membrane-spanning segments follow: residues 17-37 (FFFFFFFFSLPLSSFKLNLSS), 44-64 (WLIVFLLDFGEIMFPAPPLPI), and 67-87 (FSGALLPLSLFLGFLDVDLIA).

It is found in the membrane. This is an uncharacterized protein from Saccharomyces cerevisiae (strain ATCC 204508 / S288c) (Baker's yeast).